Consider the following 70-residue polypeptide: Basic phospholipase A2 2 (70 aa).

C28 and C44 form a disulfide bridge. Residue H47 is part of the active site. A Ca(2+)-binding site is contributed by D48.

It belongs to the phospholipase A2 family. Group II subfamily. D49 sub-subfamily. Ca(2+) is required as a cofactor. In terms of tissue distribution, expressed by the venom gland.

The protein localises to the secreted. The enzyme catalyses a 1,2-diacyl-sn-glycero-3-phosphocholine + H2O = a 1-acyl-sn-glycero-3-phosphocholine + a fatty acid + H(+). Functionally, snake venom phospholipase A2 (PLA2) that exhibits strong myotoxicity. PLA2 catalyzes the calcium-dependent hydrolysis of the 2-acyl groups in 3-sn-phosphoglycerides. The sequence is that of Basic phospholipase A2 2 from Trimeresurus stejnegeri (Chinese green tree viper).